We begin with the raw amino-acid sequence, 255 residues long: 5'-nucleotidase SurE (255 aa).

A divalent metal cation is bound by residues Asp-8, Asp-9, Ser-40, and Asn-92.

This sequence belongs to the SurE nucleotidase family. It depends on a divalent metal cation as a cofactor.

It is found in the cytoplasm. It catalyses the reaction a ribonucleoside 5'-phosphate + H2O = a ribonucleoside + phosphate. Functionally, nucleotidase that shows phosphatase activity on nucleoside 5'-monophosphates. This chain is 5'-nucleotidase SurE, found in Brucella canis (strain ATCC 23365 / NCTC 10854 / RM-666).